A 341-amino-acid chain; its full sequence is Ribosomal RNA small subunit methyltransferase H (341 aa).

S-adenosyl-L-methionine is bound by residues 47–49 (GGY), D64, F91, D109, and Q116. Positions 292 to 318 (VAASEDEASRNPRARSAKLRAGVRTPA) are disordered.

This sequence belongs to the methyltransferase superfamily. RsmH family.

It is found in the cytoplasm. The catalysed reaction is cytidine(1402) in 16S rRNA + S-adenosyl-L-methionine = N(4)-methylcytidine(1402) in 16S rRNA + S-adenosyl-L-homocysteine + H(+). Specifically methylates the N4 position of cytidine in position 1402 (C1402) of 16S rRNA. This is Ribosomal RNA small subunit methyltransferase H from Sinorhizobium fredii (strain NBRC 101917 / NGR234).